The following is a 269-amino-acid chain: E3 ubiquitin-protein ligase complex slx8-rfp subunit slx8 (269 aa).

Positions 1–10 (MPPAHKRDTN) are enriched in basic and acidic residues. Disordered regions lie at residues 1-75 (MPPA…LNRA) and 166-196 (PRKQ…QVVP). The segment covering 60–70 (PSGTTSENESL) has biased composition (polar residues). An RING-type zinc finger spans residues 206–247 (CVICLDSPENLSCTPCGHIFCNFCILSALGTTAATQKCPVCR).

In terms of assembly, part of an E3 ubiquitin complex including rfp1, rfp2 and slx8. Interacts with rfp1 and rfp2.

The protein resides in the nucleus. The enzyme catalyses S-ubiquitinyl-[E2 ubiquitin-conjugating enzyme]-L-cysteine + [acceptor protein]-L-lysine = [E2 ubiquitin-conjugating enzyme]-L-cysteine + N(6)-ubiquitinyl-[acceptor protein]-L-lysine.. Its pathway is protein modification; protein ubiquitination. Mediates ubiquitination and subsequent desumoylation/degradation of sumoylated proteins and proteins containing SUMO-like domains. Acts as a critical suppressor of gross chromosomal rearrangements (GCRs) during normal cell cycle progression. Involved in stabilizing, restarting or resolving transiently stalled replication forks. Prevents accumulation of DNA damage during cell cycle progression. The chain is E3 ubiquitin-protein ligase complex slx8-rfp subunit slx8 (slx8) from Schizosaccharomyces pombe (strain 972 / ATCC 24843) (Fission yeast).